Consider the following 661-residue polypeptide: UvrABC system protein B (661 aa).

The region spanning 25 to 182 (KGLNNKKRSQ…NDLVNLQYER (158 aa)) is the Helicase ATP-binding domain. 38–45 (GITGSGKT) serves as a coordination point for ATP. Positions 91–114 (YYDYYQPEAYIPKTDVFIEKDSSI) match the Beta-hairpin motif. The 163-residue stretch at 430–592 (QVEDLVGEIQ…IIPKTINRTI (163 aa)) folds into the Helicase C-terminal domain. The UVR domain occupies 621-656 (KAHIDKLRKEMLKAASNLEFEQAAKLRDQLKTLEEA).

This sequence belongs to the UvrB family. In terms of assembly, forms a heterotetramer with UvrA during the search for lesions. Interacts with UvrC in an incision complex.

Its subcellular location is the cytoplasm. In terms of biological role, the UvrABC repair system catalyzes the recognition and processing of DNA lesions. A damage recognition complex composed of 2 UvrA and 2 UvrB subunits scans DNA for abnormalities. Upon binding of the UvrA(2)B(2) complex to a putative damaged site, the DNA wraps around one UvrB monomer. DNA wrap is dependent on ATP binding by UvrB and probably causes local melting of the DNA helix, facilitating insertion of UvrB beta-hairpin between the DNA strands. Then UvrB probes one DNA strand for the presence of a lesion. If a lesion is found the UvrA subunits dissociate and the UvrB-DNA preincision complex is formed. This complex is subsequently bound by UvrC and the second UvrB is released. If no lesion is found, the DNA wraps around the other UvrB subunit that will check the other stand for damage. The chain is UvrABC system protein B from Rickettsia bellii (strain OSU 85-389).